The sequence spans 146 residues: Envelope protein OPG155 (146 aa).

The chain crosses the membrane as a helical; Signal-anchor for type III membrane protein span at residues 1–21 (MNSLSIFFIVVATAAVCLLFI). Topologically, residues 22 to 146 (QGYSIYENYG…VECQFLKSVL (125 aa)) are intravirion.

The protein belongs to the orthopoxvirus OPG155 protein family. In terms of assembly, part of a stable entry-fusion complex (EFC) which is at least composed of proteins OPG143, OPG147, OPG155, OPG086, OPG094, OPG107, OPG104, and OPG099. Formation of the viral membrane is necessary for the assembly of the complex. Interacts directly with protein OPG107. In terms of processing, contains two intramolecular disulfide bonds. They are created by the viral disulfide bond formation pathway, a poxvirus-specific pathway that operates on the cytoplasmic side of the MV membranes.

It is found in the virion membrane. In terms of biological role, envelope protein required for virus entry into host cell and for cell-cell fusion (syncytium formation). The sequence is that of Envelope protein OPG155 (OPG155) from Variola virus (isolate Human/India/Ind3/1967) (VARV).